We begin with the raw amino-acid sequence, 196 residues long: SAGA-associated factor 11 homolog (196 aa).

The SGF11-type zinc finger occupies 102–123; it reads CTCPNCDRLVAAARFAPHLEKC. The interval 140–196 is disordered; sequence TKEGTSASSNSSYVHSGANAGGTDDEDDVDWSSDKRKKKSTQNSRNNGSKKNNGKTF. A compositionally biased stretch (polar residues) spans 142–153; it reads EGTSASSNSSYV. Ser172 is modified (phosphoserine). Low complexity predominate over residues 182-196; sequence NSRNNGSKKNNGKTF.

The protein belongs to the SGF11 family. In terms of assembly, component of some SAGA transcription coactivator-HAT complexes, at least composed of Ada2b, not/nonstop, Pcaf/Gcn5, Sgf11 and Spt3. Within the SAGA complex, Sgf11, e(y)2, and not/nonstop form an additional subcomplex of SAGA called the DUB module (deubiquitination module). Interacts directly with not/nonstop. Interacts with the AMEX complex component xmas-2. Interacts with Cbp80; important for promoter recruitment of Sgf11 that is not associated with the DUB module.

The protein localises to the nucleus. It is found in the nucleoplasm. The protein resides in the cytoplasm. Functionally, component of the transcription regulatory histone acetylation (HAT) complex SAGA, a multiprotein complex that activates transcription by remodeling chromatin and mediating histone acetylation and deubiquitination. Within the SAGA complex, participates in a subcomplex that specifically deubiquitinates histone H2B. The SAGA complex is recruited to specific gene promoters by activators, where it is required for transcription. Required for nuclear receptor-mediated transactivation. Binds independently on SAGA to promoters in an RNA-dependent manner. Binds to mRNA and is essential for total mRNA export from the nucleus. Required to counteract heterochromatin silencing. Controls the development of neuronal connectivity in visual system by being required for accurate axon targeting in the optic lobe. Required for expression of ecdysone-induced genes such as br/broad. The chain is SAGA-associated factor 11 homolog from Drosophila persimilis (Fruit fly).